The following is a 623-amino-acid chain: tRNA uridine 5-carboxymethylaminomethyl modification enzyme MnmG (623 aa).

Residue 12–17 (GAGHAG) participates in FAD binding. 272–286 (GPRYCPSIEDKINRF) lines the NAD(+) pocket.

The protein belongs to the MnmG family. In terms of assembly, homodimer. Heterotetramer of two MnmE and two MnmG subunits. The cofactor is FAD.

It localises to the cytoplasm. Functionally, NAD-binding protein involved in the addition of a carboxymethylaminomethyl (cmnm) group at the wobble position (U34) of certain tRNAs, forming tRNA-cmnm(5)s(2)U34. This is tRNA uridine 5-carboxymethylaminomethyl modification enzyme MnmG from Flavobacterium psychrophilum (strain ATCC 49511 / DSM 21280 / CIP 103535 / JIP02/86).